Reading from the N-terminus, the 965-residue chain is Valine--tRNA ligase (965 aa).

The tract at residues 1–22 (MENTPSHINKTEPSLDKTYSPQ) is disordered. The short motif at 56 to 66 (PNVTGSLHMGH) is the 'HIGH' region element. Residues 568–572 (KMSKS) carry the 'KMSKS' region motif. Lys571 provides a ligand contact to ATP. Positions 896-965 (LIDKATELDR…IEQQATIAAL (70 aa)) form a coiled coil.

It belongs to the class-I aminoacyl-tRNA synthetase family. ValS type 1 subfamily. In terms of assembly, monomer.

The protein localises to the cytoplasm. The catalysed reaction is tRNA(Val) + L-valine + ATP = L-valyl-tRNA(Val) + AMP + diphosphate. Functionally, catalyzes the attachment of valine to tRNA(Val). As ValRS can inadvertently accommodate and process structurally similar amino acids such as threonine, to avoid such errors, it has a 'posttransfer' editing activity that hydrolyzes mischarged Thr-tRNA(Val) in a tRNA-dependent manner. In Yersinia pseudotuberculosis serotype I (strain IP32953), this protein is Valine--tRNA ligase.